Reading from the N-terminus, the 476-residue chain is Aspartyl/glutamyl-tRNA(Asn/Gln) amidotransferase subunit B (476 aa).

It belongs to the GatB/GatE family. GatB subfamily. In terms of assembly, heterotrimer of A, B and C subunits.

It carries out the reaction L-glutamyl-tRNA(Gln) + L-glutamine + ATP + H2O = L-glutaminyl-tRNA(Gln) + L-glutamate + ADP + phosphate + H(+). It catalyses the reaction L-aspartyl-tRNA(Asn) + L-glutamine + ATP + H2O = L-asparaginyl-tRNA(Asn) + L-glutamate + ADP + phosphate + 2 H(+). Functionally, allows the formation of correctly charged Asn-tRNA(Asn) or Gln-tRNA(Gln) through the transamidation of misacylated Asp-tRNA(Asn) or Glu-tRNA(Gln) in organisms which lack either or both of asparaginyl-tRNA or glutaminyl-tRNA synthetases. The reaction takes place in the presence of glutamine and ATP through an activated phospho-Asp-tRNA(Asn) or phospho-Glu-tRNA(Gln). This is Aspartyl/glutamyl-tRNA(Asn/Gln) amidotransferase subunit B from Listeria innocua serovar 6a (strain ATCC BAA-680 / CLIP 11262).